A 304-amino-acid chain; its full sequence is HPr kinase/phosphorylase (304 aa).

Catalysis depends on residues His136 and Lys157. 151 to 158 (GESGIGKS) is an ATP binding site. Ser158 contributes to the Mg(2+) binding site. Asp175 functions as the Proton acceptor; for phosphorylation activity. Proton donor; for dephosphorylation activity in the catalytic mechanism. Residues 198–207 (LEVRGIGIID) are important for the catalytic mechanism of both phosphorylation and dephosphorylation. Glu199 provides a ligand contact to Mg(2+). Arg240 is an active-site residue. The important for the catalytic mechanism of dephosphorylation stretch occupies residues 261–266 (PVRPGR).

This sequence belongs to the HPrK/P family. In terms of assembly, homohexamer. Mg(2+) serves as cofactor.

The catalysed reaction is [HPr protein]-L-serine + ATP = [HPr protein]-O-phospho-L-serine + ADP + H(+). It carries out the reaction [HPr protein]-O-phospho-L-serine + phosphate + H(+) = [HPr protein]-L-serine + diphosphate. Its function is as follows. Catalyzes the ATP- as well as the pyrophosphate-dependent phosphorylation of a specific serine residue in HPr, a phosphocarrier protein of the phosphoenolpyruvate-dependent sugar phosphotransferase system (PTS). HprK/P also catalyzes the pyrophosphate-producing, inorganic phosphate-dependent dephosphorylation (phosphorolysis) of seryl-phosphorylated HPr (P-Ser-HPr). The two antagonistic activities of HprK/P are regulated by several intracellular metabolites, which change their concentration in response to the absence or presence of rapidly metabolisable carbon sources (glucose, fructose, etc.) in the growth medium. Therefore, by controlling the phosphorylation state of HPr, HPrK/P is a sensor enzyme that plays a major role in the regulation of carbon metabolism and sugar transport: it mediates carbon catabolite repression (CCR), and regulates PTS-catalyzed carbohydrate uptake and inducer exclusion. This Clostridium botulinum (strain Alaska E43 / Type E3) protein is HPr kinase/phosphorylase.